Here is a 406-residue protein sequence, read N- to C-terminus: NAC transcription factor NAM-1 (406 aa).

Residues 1–11 are compositionally biased toward polar residues; sequence MGSPDSSSGSA. The disordered stretch occupies residues 1–40; sequence MGSPDSSSGSAQKPPRHQHQHQPPPPRRQGSAPELPPGFR. The NAC domain maps to 35-204; sequence LPPGFRFHPT…DWVLCRIYKK (170 aa). Residues 137–210 mediate DNA binding; sequence VGVKKALVFY…IYKKTSKAAA (74 aa).

Its subcellular location is the nucleus. Functionally, transcription factor of the NAC family associated with the grain protein content (GPC). Accelerates senescence and increases nutrient remobilization from leaves to developing grains. Sequences of 11 European varieties of H.vulgare tested belongs to the same haplotype while the sequence found in H.spontaneum, an ancestor of the cultivated H.vulgare which has a higher GPC, belongs to an other haplotype. The polypeptide is NAC transcription factor NAM-1 (NAM-1) (Hordeum vulgare subsp. vulgare (Domesticated barley)).